The primary structure comprises 180 residues: ATP-dependent protease subunit HslV (180 aa).

Residue Thr7 is part of the active site. Positions 163, 166, and 169 each coordinate Na(+).

This sequence belongs to the peptidase T1B family. HslV subfamily. A double ring-shaped homohexamer of HslV is capped on each side by a ring-shaped HslU homohexamer. The assembly of the HslU/HslV complex is dependent on binding of ATP.

It is found in the cytoplasm. It carries out the reaction ATP-dependent cleavage of peptide bonds with broad specificity.. Allosterically activated by HslU binding. Its function is as follows. Protease subunit of a proteasome-like degradation complex believed to be a general protein degrading machinery. This Alcanivorax borkumensis (strain ATCC 700651 / DSM 11573 / NCIMB 13689 / SK2) protein is ATP-dependent protease subunit HslV.